The following is a 294-amino-acid chain: Octopine-binding periplasmic protein (294 aa).

The N-terminal stretch at 1 to 20 is a signal peptide; it reads MRLKSIMCAALFVVAGQAAA. A disulfide bond links cysteine 57 and cysteine 64.

This sequence belongs to the bacterial solute-binding protein 3 family.

The protein resides in the periplasm. Component of the octopine active transport system probably consisting of four subunits: Q, M, P and T. The chain is Octopine-binding periplasmic protein (occT) from Rhizobium meliloti (Ensifer meliloti).